The following is a 58-amino-acid chain: Small ribosomal subunit protein bS21 (58 aa).

The tract at residues 24-58 is disordered; it reads TKAGTLQEARKREHYEKPSVKRKRKSEAARKRKKI. Positions 31 to 42 are enriched in basic and acidic residues; the sequence is EARKREHYEKPS. Positions 43–58 are enriched in basic residues; the sequence is VKRKRKSEAARKRKKI.

Belongs to the bacterial ribosomal protein bS21 family.

The polypeptide is Small ribosomal subunit protein bS21 (Streptococcus thermophilus (strain CNRZ 1066)).